The following is a 357-amino-acid chain: Large ribosomal subunit protein mL45 (357 aa).

The interval 333–357 is disordered; sequence EAKALPLRTTEKLEEAKKEKEQQEI. A compositionally biased stretch (basic and acidic residues) spans 341 to 357; it reads TTEKLEEAKKEKEQQEI.

Belongs to the mitochondrion-specific ribosomal protein mL45 family.

It localises to the mitochondrion. The chain is Large ribosomal subunit protein mL45 (mrpl-45) from Caenorhabditis elegans.